Here is a 352-residue protein sequence, read N- to C-terminus: Fatty acid synthase (352 aa).

In terms of domain architecture, Ketosynthase family 3 (KS3) spans 1-352; the sequence is MEDVVIAGIA…KVVLSLEHGL (352 aa). Active-site for beta-ketoacyl synthase activity residues include C161, H293, and H331.

In terms of assembly, homodimer which monomers are arranged in a head to tail fashion.

The catalysed reaction is acetyl-CoA + n malonyl-CoA + 2n NADPH + 2n H(+) = a long-chain fatty acid + (n+1) CoA + n CO2 + 2n NADP(+).. Fatty acid synthetase catalyzes the formation of long-chain fatty acids from acetyl-CoA, malonyl-CoA and NADPH. This multifunctional protein has 7 catalytic activities as an acyl carrier protein. The chain is Fatty acid synthase (FASN) from Anser anser anser (Western greylag goose).